The primary structure comprises 554 residues: Formate--tetrahydrofolate ligase (554 aa).

65-72 (TPAGEGKT) is an ATP binding site.

It belongs to the formate--tetrahydrofolate ligase family.

The catalysed reaction is (6S)-5,6,7,8-tetrahydrofolate + formate + ATP = (6R)-10-formyltetrahydrofolate + ADP + phosphate. It participates in one-carbon metabolism; tetrahydrofolate interconversion. The chain is Formate--tetrahydrofolate ligase from Petrotoga mobilis (strain DSM 10674 / SJ95).